A 167-amino-acid polypeptide reads, in one-letter code: Gametocyte-specific factor 1 homolog (167 aa).

2 CHHC U11-48K-type zinc fingers span residues 1–28 (MVYC…RVIY) and 34–61 (LMVC…EDRN). Positions 4, 10, 20, 24, 37, 43, 53, and 57 each coordinate Zn(2+). The span at 128–161 (EKRRHFGEDYEEEKKPRKAKARADLRPTPYEHRR) shows a compositional bias: basic and acidic residues. The segment at 128–167 (EKRRHFGEDYEEEKKPRKAKARADLRPTPYEHRRPYSRRQ) is disordered.

It belongs to the UPF0224 (FAM112) family. Interacts with piwi.

The protein resides in the nucleus. Acts via the piwi-interacting RNA (piRNA) pathway which mediates the repression of transposable elements during meiosis by forming complexes composed of piRNAs and piwi proteins and governs the methylation and subsequent repression of transposons. Required for repression of transposons and neighboring genes in ovarian somatic and germline cells. The polypeptide is Gametocyte-specific factor 1 homolog (Drosophila melanogaster (Fruit fly)).